We begin with the raw amino-acid sequence, 227 residues long: Ribose-5-phosphate isomerase A (227 aa).

Substrate is bound by residues 26–29, 82–85, and 95–98; these read TGST, DGAD, and KGGG. Glu104 functions as the Proton acceptor in the catalytic mechanism. Residue Lys122 coordinates substrate.

This sequence belongs to the ribose 5-phosphate isomerase family. Homodimer.

The enzyme catalyses aldehydo-D-ribose 5-phosphate = D-ribulose 5-phosphate. The protein operates within carbohydrate degradation; pentose phosphate pathway; D-ribose 5-phosphate from D-ribulose 5-phosphate (non-oxidative stage): step 1/1. Its function is as follows. Catalyzes the reversible conversion of ribose-5-phosphate to ribulose 5-phosphate. The chain is Ribose-5-phosphate isomerase A from Streptococcus pyogenes serotype M1.